A 596-amino-acid chain; its full sequence is Aspartate--tRNA(Asp/Asn) ligase (596 aa).

Glu-182 is a binding site for L-aspartate. Residues 206–209 (QLFK) form an aspartate region. An L-aspartate-binding site is contributed by Arg-228. ATP-binding positions include 228–230 (RDE) and Gln-237. L-aspartate is bound at residue His-456. Glu-490 contacts ATP. Arg-497 contacts L-aspartate. 542–545 (GLDR) contributes to the ATP binding site.

This sequence belongs to the class-II aminoacyl-tRNA synthetase family. Type 1 subfamily. As to quaternary structure, homodimer.

The protein localises to the cytoplasm. The enzyme catalyses tRNA(Asx) + L-aspartate + ATP = L-aspartyl-tRNA(Asx) + AMP + diphosphate. Its function is as follows. Aspartyl-tRNA synthetase with relaxed tRNA specificity since it is able to aspartylate not only its cognate tRNA(Asp) but also tRNA(Asn). Reaction proceeds in two steps: L-aspartate is first activated by ATP to form Asp-AMP and then transferred to the acceptor end of tRNA(Asp/Asn). The chain is Aspartate--tRNA(Asp/Asn) ligase from Syntrophotalea carbinolica (strain DSM 2380 / NBRC 103641 / GraBd1) (Pelobacter carbinolicus).